The following is a 325-amino-acid chain: ATP phosphoribosyltransferase (325 aa).

It belongs to the ATP phosphoribosyltransferase family. Long subfamily. Requires Mg(2+) as cofactor.

The protein resides in the cytoplasm. The catalysed reaction is 1-(5-phospho-beta-D-ribosyl)-ATP + diphosphate = 5-phospho-alpha-D-ribose 1-diphosphate + ATP. It participates in amino-acid biosynthesis; L-histidine biosynthesis; L-histidine from 5-phospho-alpha-D-ribose 1-diphosphate: step 1/9. Feedback inhibited by histidine. Catalyzes the condensation of ATP and 5-phosphoribose 1-diphosphate to form N'-(5'-phosphoribosyl)-ATP (PR-ATP). Has a crucial role in the pathway because the rate of histidine biosynthesis seems to be controlled primarily by regulation of HisG enzymatic activity. The protein is ATP phosphoribosyltransferase of Rhodopseudomonas palustris (strain BisA53).